Here is a 239-residue protein sequence, read N- to C-terminus: Suppressor of organelle fusion 1 (239 aa).

It belongs to the WD repeat WDR91 family. In terms of assembly, interacts with sorf-2; the interaction is direct. Interacts with bec-1.

It localises to the early endosome. Its subcellular location is the late endosome. The protein localises to the cytoplasm. Its function is as follows. Together with sorf-2 negatively regulates the levels of phosphatidylinositol 3-phosphate (PtdIns3P) to enable the conversion of early endosomes to late endosomes. Binds to sorf-2 and the sorf-1-sorf-2 complex likely acts through bec-1, a non-catalytic subunit of phosphatidylinositol 3-kinase (PI3K), to suppress PI3K activity, thereby negatively regulating endosomal PtdIns3P levels. In Caenorhabditis elegans, this protein is Suppressor of organelle fusion 1.